The following is a 410-amino-acid chain: 3-phenylpropionate/cinnamic acid dioxygenase ferredoxin--NAD(+) reductase component (410 aa).

Residue Thr5–Asp36 participates in FAD binding. Residue Ser146–Glu184 participates in NAD(+) binding.

The protein belongs to the bacterial ring-hydroxylating dioxygenase ferredoxin reductase family. This dioxygenase system consists of four proteins: the two subunits of the hydroxylase component (HcaE and HcaF), a ferredoxin (HcaC) and a ferredoxin reductase (HcaD). The cofactor is FAD.

It carries out the reaction 2 reduced [2Fe-2S]-[ferredoxin] + NAD(+) + H(+) = 2 oxidized [2Fe-2S]-[ferredoxin] + NADH. Its pathway is aromatic compound metabolism; 3-phenylpropanoate degradation. Functionally, part of the multicomponent 3-phenylpropionate dioxygenase, that converts 3-phenylpropionic acid (PP) and cinnamic acid (CI) into 3-phenylpropionate-dihydrodiol (PP-dihydrodiol) and cinnamic acid-dihydrodiol (CI-dihydrodiol), respectively. This is 3-phenylpropionate/cinnamic acid dioxygenase ferredoxin--NAD(+) reductase component from Shigella flexneri serotype 5b (strain 8401).